The following is a 228-amino-acid chain: N-acylneuraminate cytidylyltransferase (228 aa).

This sequence belongs to the CMP-NeuNAc synthase family.

It localises to the cytoplasm. It catalyses the reaction an N-acylneuraminate + CTP = a CMP-N-acyl-beta-neuraminate + diphosphate. The polypeptide is N-acylneuraminate cytidylyltransferase (neuA) (Neisseria meningitidis serogroup B (strain ATCC BAA-335 / MC58)).